Consider the following 196-residue polypeptide: ATP-dependent Clp protease proteolytic subunit (196 aa).

S96 serves as the catalytic Nucleophile. The active site involves H121.

Belongs to the peptidase S14 family. As to quaternary structure, fourteen ClpP subunits assemble into 2 heptameric rings which stack back to back to give a disk-like structure with a central cavity, resembling the structure of eukaryotic proteasomes.

The protein resides in the cytoplasm. It catalyses the reaction Hydrolysis of proteins to small peptides in the presence of ATP and magnesium. alpha-casein is the usual test substrate. In the absence of ATP, only oligopeptides shorter than five residues are hydrolyzed (such as succinyl-Leu-Tyr-|-NHMec, and Leu-Tyr-Leu-|-Tyr-Trp, in which cleavage of the -Tyr-|-Leu- and -Tyr-|-Trp bonds also occurs).. Functionally, cleaves peptides in various proteins in a process that requires ATP hydrolysis. Has a chymotrypsin-like activity. Plays a major role in the degradation of misfolded proteins. The protein is ATP-dependent Clp protease proteolytic subunit of Streptococcus thermophilus (strain CNRZ 1066).